The sequence spans 489 residues: ERO1-like protein alpha (489 aa).

The first 20 residues, 1–20 (METCVLLLGLFLTSVHVTTA), serve as a signal peptide directing secretion. 8 cysteine pairs are disulfide-bonded: Cys27/Cys40, Cys29/Cys38, Cys77/Cys382, Cys86/Cys91, Cys86/Cys123, Cys91/Cys96, Cys200/Cys232, and Cys385/Cys388. FAD contacts are provided by Arg179, Thr181, and Trp192. Ser243 and His246 together coordinate FAD. Residue Asn271 is glycosylated (N-linked (GlcNAc...) asparagine). Residues Arg278 and Arg291 each coordinate FAD. Asn375 is a glycosylation site (N-linked (GlcNAc...) asparagine).

It belongs to the EROs family. In terms of assembly, predominantly monomer. May function both as a monomer and a homodimer. FAD is required as a cofactor. Post-translationally, the Cys-86/Cys-91 and Cys-385/Cys-388 disulfide bonds constitute the redox-active center. The Cys-86/Cys-91 disulfide bond may accept electron from protein disulfide isomerase (PDI) and funnel them to the active site disulfide Cys-385/Cys-388.

The protein resides in the endoplasmic reticulum membrane. Its activity is regulated as follows. Enzyme activity is tightly regulated to prevent the accumulation of reactive oxygen species in the endoplasmic reticulum. Reversibly down-regulated by the formation of disulfide bonds between the active site Cys-86 and Cys-123, and between Cys-91 and Cys-96. Glutathione may be required to regulate its activity in the endoplasmic reticulum. In terms of biological role, oxidoreductase involved in disulfide bond formation in the endoplasmic reticulum. Efficiently reoxidizes P4HB/PDI, the enzyme catalyzing protein disulfide formation, in order to allow P4HB to sustain additional rounds of disulfide formation. Following P4HB reoxidation, passes its electrons to molecular oxygen via FAD, leading to the production of reactive oxygen species (ROS) in the cell. Required for the folding of immunoglobulins. The protein is ERO1-like protein alpha of Danio rerio (Zebrafish).